The following is a 794-amino-acid chain: Striatin-3 (794 aa).

M1 is modified (N-acetylmethionine). Gly residues predominate over residues 1-12 (MDELAGGGGGQG). The interval 1–59 (MDELAGGGGGQGMAVPPRPQQGPGGNLSLPPGANGAPGGGGPPAAETAGPPAGPELSRP) is disordered. Residues 70 to 78 (YIQHEWARF) form a caveolin-binding region. Residues 76 to 135 (ARFEMERAHWEVERAELQARIAFLQGERKGQENLKKDLVRRIKMLEYALKQERAKYHKLK) adopt a coiled-coil conformation. Position 149 is a phosphothreonine (T149). A calmodulin-binding region spans residues 164–181 (QNSQLTWKQGRQLLRQYL). S200, S212, S227, S255, and S332 each carry phosphoserine. The disordered stretch occupies residues 309–339 (EDGEGAGEARSSGDGTEWDKDDLSPTAEVWD). WD repeat units lie at residues 475 to 514 (SHFD…PAKK), 528 to 567 (AHIG…VDPY), 581 to 620 (AHTD…PCIC), 676 to 715 (QSSN…MIHS), 718 to 757 (AHLD…CVQE), and 764 to 794 (KLDE…KVFV).

Belongs to the WD repeat striatin family. Tetramerizes. Part of the core of STRIPAK complexes composed of PP2A catalytic and scaffolding subunits, the striatins (PP2A regulatory subunits), the striatin-associated proteins MOB4, STRIP1 and STRIP2, PDCD10 and members of the STE20 kinases, such as STK24 and STK26. The STRIPAK complex can be extended by adapter proteins such as SLMAP:SIKE1 or CTTNBP2NL. Interacts with CDC42BPB.

The protein resides in the cytoplasm. Its subcellular location is the membrane. Its function is as follows. Calmodulin-binding scaffolding protein which is the center of the striatin-interacting phosphatase and kinase (STRIPAK) complexes. STRIPAK complexes have critical roles in protein (de)phosphorylation and are regulators of multiple signaling pathways including Hippo, MAPK, nuclear receptor and cytoskeleton remodeling. Different types of STRIPAK complexes are involved in a variety of biological processes such as cell growth, differentiation, apoptosis, metabolism and immune regulation. This chain is Striatin-3 (Strn3), found in Rattus norvegicus (Rat).